A 1484-amino-acid chain; its full sequence is Glutamate receptor ionotropic, NMDA 2B (1484 aa).

An N-terminal signal peptide occupies residues 1 to 26 (MKPRAECCSPKFWLVLAVLAVSGSRA). The Extracellular segment spans residues 27 to 555 (RSQKSPPSIG…SPSAFLEPFS (529 aa)). The N-linked (GlcNAc...) asparagine glycan is linked to N74. Cysteines 86 and 321 form a disulfide. Positions 127 and 284 each coordinate Zn(2+). 4 N-linked (GlcNAc...) asparagine glycosylation sites follow: N341, N348, N444, and N491. 2 cysteine pairs are disulfide-bonded: C429/C456 and C436/C457. L-glutamate contacts are provided by T514 and R519. An N-linked (GlcNAc...) asparagine glycan is attached at N542. Residues 556–576 (ADVWVMMFVMLLIVSAVAVFV) form a helical membrane-spanning segment. Residues 577–601 (FEYFSPVGYNRCLADGREPGGPSFT) are Cytoplasmic-facing. Residues 602–613 (IGKAIWLLWGLV) constitute an intramembrane region (discontinuously helical). The pore-forming stretch occupies residues 604–623 (KAIWLLWGLVFNNSVPVQNP). Topologically, residues 614–627 (FNNSVPVQNPKGTT) are cytoplasmic. Residues 628 to 647 (SKIMVSVWAFFAVIFLASYT) traverse the membrane as a helical segment. The Extracellular segment spans residues 648–819 (ANLAAFMIQE…SSQLDIDNMA (172 aa)). The N-linked (GlcNAc...) asparagine glycan is linked to N688. Residues 690–691 (ST) and D732 contribute to the L-glutamate site. Residues 820 to 835 (GVFYMLGAAMALSLIT) form a helical membrane-spanning segment. The Cytoplasmic segment spans residues 836–1484 (FICEHLFYWQ…EKLSSIESDV (649 aa)). Residues S882, S886, S917, and S920 each carry the phosphoserine modification. 2 positions are modified to phosphotyrosine: Y962 and Y1039. Phosphoserine is present on residues S1058, S1061, and S1064. Positions 1074-1097 (EGNAAKRRKQQYKDSLKKRPASAK) are disordered. 2 positions are modified to phosphotyrosine: Y1109 and Y1133. S1143 carries the post-translational modification Phosphoserine. Phosphotyrosine is present on Y1155. Positions 1161–1194 (DFKRDSVSGGGPCTNRSHIKHGTGDKHGVVSGVP) are disordered. Residues S1255 and S1259 each carry the phosphoserine modification. Residues 1271-1301 (AVTSNASTTKYPQSPTNSKAQKKNRNKLRRQ) form a disordered region. The segment covering 1272-1289 (VTSNASTTKYPQSPTNSK) has biased composition (polar residues). The span at 1290–1301 (AQKKNRNKLRRQ) shows a compositional bias: basic residues. An interaction with DAPK1 region spans residues 1292–1304 (KKNRNKLRRQHSY). S1303 bears the Phosphoserine; by DAPK1 mark. Y1474 is subject to Phosphotyrosine. Positions 1482 to 1484 (SDV) match the PDZ-binding motif.

This sequence belongs to the glutamate-gated ion channel (TC 1.A.10.1) family. NR2B/GRIN2B subfamily. As to quaternary structure, heterotetramer. Forms heterotetrameric channels composed of two GluN1/zeta subunits (GRIN1), and two identical GluN2/epsilon subunits (GRIN2A, GRIN2B, GRIN2C or GRIN2D) or GluN3 subunits (GRIN3A or GRIN3B) (in vitro). Can also form heterotetrameric channels that contain at least two GluN1 subunits and at least two different GluN2 subunits (or a combination of one GluN2 and one GluN3 subunits) (in vitro). In vivo, the subunit composition may depend on the expression levels of the different subunits. Found in a complex with GRIN1 and GRIN3B. Found in a complex with GRIN1, GRIN3A and PPP2CB. Interacts with PDZ domains of PATJ, DLG3 and DLG4. Interacts with HIP1 and NETO1. Interacts with MAGI3. Interacts with DAPK1. Found in a complex with GRIN1 and PRR7. Interacts with PRR7. Interacts with CAMK2A. Interacts with ARC; preventing ARC oligomerization. Interacts with TMEM25. Interacts (via the extreme C-terminus) with FRMPD2 (via the second PDZ domain); the interaction is direct and is likely to promote NMDAR-mediated neural signal transmission. Interacts with FAM81A; the interaction facilitates condensate formation via liquid-liquid phase separation. Phosphorylated on tyrosine residues. Phosphorylation at Ser-1303 by DAPK1 enhances synaptic NMDA receptor channel activity. Primarily found in the fronto-parieto-temporal cortex and hippocampus pyramidal cells, lower expression in the basal ganglia.

Its subcellular location is the cell membrane. The protein resides in the postsynaptic cell membrane. The protein localises to the cell projection. It is found in the dendrite. It localises to the late endosome. Its subcellular location is the lysosome. The protein resides in the cytoplasm. The protein localises to the cytoskeleton. The catalysed reaction is Ca(2+)(in) = Ca(2+)(out). It carries out the reaction Na(+)(in) = Na(+)(out). It catalyses the reaction K(+)(in) = K(+)(out). Functionally, component of N-methyl-D-aspartate (NMDA) receptors (NMDARs) that function as heterotetrameric, ligand-gated cation channels with high calcium permeability and voltage-dependent block by Mg(2+). Participates in synaptic plasticity for learning and memory formation by contributing to the long-term depression (LTD) of hippocampus membrane currents. Channel activation requires binding of the neurotransmitter L-glutamate to the GluN2 subunit, glycine or D-serine binding to the GluN1 subunit, plus membrane depolarization to eliminate channel inhibition by Mg(2+). NMDARs mediate simultaneously the potasium efflux and the influx of calcium and sodium. Each GluN2 subunit confers differential attributes to channel properties, including activation, deactivation and desensitization kinetics, pH sensitivity, Ca2(+) permeability, and binding to allosteric modulators. In concert with DAPK1 at extrasynaptic sites, acts as a central mediator for stroke damage. Its phosphorylation at Ser-1303 by DAPK1 enhances synaptic NMDA receptor channel activity inducing injurious Ca2+ influx through them, resulting in an irreversible neuronal death. The chain is Glutamate receptor ionotropic, NMDA 2B from Homo sapiens (Human).